Consider the following 395-residue polypeptide: Gastric triacylglycerol lipase (395 aa).

The first 18 residues, 1–18 (MWLLLITSVISTFGGAHG), serve as a signal peptide directing secretion. 3 N-linked (GlcNAc...) asparagine glycosylation sites follow: N33, N68, and N98. Residues 77 to 376 (PVVYLQHGLI…LAYNHLDFIW (300 aa)) form the AB hydrolase-1 domain. Catalysis depends on S171, which acts as the Nucleophile. A disulfide bridge links C245 with C254. The N-linked (GlcNAc...) asparagine glycan is linked to N270. Catalysis depends on charge relay system residues D342 and H371.

It belongs to the AB hydrolase superfamily. Lipase family. Secreted by the serous (von Ebner's) glands at the back of the rat tongue.

Its subcellular location is the secreted. It carries out the reaction a triacylglycerol + H2O = a diacylglycerol + a fatty acid + H(+). The enzyme catalyses 1,2,3-tri-(9Z-octadecenoyl)-glycerol + H2O = 1,2-di-(9Z-octadecenoyl)-sn-glycerol + (9Z)-octadecenoate + H(+). The catalysed reaction is 1,2,3-trioctanoylglycerol + H2O = 1,2-dioctanoyl-sn-glycerol + octanoate + H(+). In terms of biological role, catalyzes the hydrolysis of triacylglycerols to yield free fatty acids, diacylglycerol, monoacylglycerol, and glycerol. Shows a preferential hydrolysis at the sn-3 position of triacylglycerol. This is Gastric triacylglycerol lipase (Lipf) from Rattus norvegicus (Rat).